Consider the following 256-residue polypeptide: Catechol O-methyltransferase A (256 aa).

A signal peptide spans 1–27 (MLWVVLAVVVVLASVLVLLRQSSGLLA). Residue Asn58 is glycosylated (N-linked (GlcNAc...) asparagine). Residues Val84, Ser114, Glu132, and Asp183 each contribute to the S-adenosyl-L-methionine site. Residue Asp183 coordinates Mg(2+). Lys186 contributes to the substrate binding site. Residues Asp211 and Asn212 each coordinate Mg(2+). Positions 212 and 241 each coordinate substrate.

Belongs to the class I-like SAM-binding methyltransferase superfamily. Cation-dependent O-methyltransferase family. Mg(2+) is required as a cofactor. Widely expressed. Has higher expression in females compared to males. Strongly expressed in liver and diencephalon. Expressed at lower levels in hindbrain, spinal cord, eye, telencephalon, spleen, gut, gill and muscle. Detected in ovary and testis. In eye, detected in all layers of the retina with highest expression in the inner nuclear layer. In gut, expressed in the lamina propria but has little or no expression in gut epithelium. In brain, has strongest expression near the midline of the telencephalon, in the periventricular gray zone of the optic tectum, in the preglomerular nucleus, and near the walls of the diencephalic ventricle.

The protein localises to the secreted. It catalyses the reaction a catechol + S-adenosyl-L-methionine = a guaiacol + S-adenosyl-L-homocysteine + H(+). In terms of biological role, catalyzes the O-methylation, and thereby the inactivation, of catecholamine neurotransmitters and catechol hormones. Shows highest activity towards catecholestrogens and dobutamine. Also has lower activity towards L-DOPA, dopamine and epinephrine. Active towards the xenobiotic compounds methyl-DOPA, carbidopa, isoproterenol, and apomorphine. This is Catechol O-methyltransferase A from Danio rerio (Zebrafish).